Consider the following 1324-residue polypeptide: Actin cytoskeleton-regulatory complex protein PAN1 (1324 aa).

Composition is skewed to low complexity over residues 1 to 26 (MYNQ…AQPQ) and 35 to 54 (QQQV…QTFS). A disordered region spans residues 1 to 98 (MYNQYQQQPQ…GMQQPFGNQQ (98 aa)). The span at 55-67 (NAGALNQQPTGFS) shows a compositional bias: polar residues. The segment covering 68–98 (QQTQAQPQQPQQQQPQSQPQQGMQQPFGNQQ) has biased composition (low complexity). An EH 1 domain is found at 199 to 288 (DQAKFEKLFR…SRTKAEVSSF (90 aa)). The 36-residue stretch at 232 to 267 (LQPHQLAKIWTLSDTNKAGVLLFPEFALAMYLVNSV) folds into the EF-hand 1 domain. Residues 299 to 427 (DSEVEQKPKT…SMPQTSFTQQ (129 aa)) form a disordered region. The segment covering 330–364 (QLSFGSQPQQMQQQQQQQQQQPQQQSFQGLTQQPT) has biased composition (low complexity). Positions 371-411 (PQTSFGNTSQALQPQSTGFMPQNSFNQPLNAQTTGGFSSVL) are enriched in polar residues. Positions 494 to 583 (EKSLFYKIFE…PSLIPSSTKI (90 aa)) constitute an EH 2 domain. Positions 527–562 (LNRSDLEHIWNLCDTNNSGNLNKQEFALGMHLVYRR) constitute an EF-hand 2 domain. Ca(2+)-binding residues include aspartate 540, asparagine 542, serine 544, asparagine 546, and glutamate 551. The span at 593–614 (QGVDKNNRQPTKEDGLRFRNND) shows a compositional bias: basic and acidic residues. Disordered stretches follow at residues 593–634 (QGVD…SKKV), 891–923 (TYRN…EQAK), 935–1175 (IKKK…VPVA), 1201–1240 (LVKS…INSD), and 1259–1324 (TLAE…PPMP). A coiled-coil region spans residues 622-690 (RNRRKTIDQS…ENLKSQIQAL (69 aa)). Residues 911–923 (PEERSAYVKEQAK) are compositionally biased toward basic and acidic residues. Residues 941 to 984 (SSQSSPNPPQLTQQQQPQQQQQQQQQQQQQQQQQPNYYQQPSQP) show a composition bias toward low complexity. Over residues 998-1008 (DDDDEDEEDEE) the composition is skewed to acidic residues. The stretch at 999–1036 (DDDEDEEDEEERRLLEQLEKLKLKKKQEKEARLAAKRQ) forms a coiled coil. Residues 1009–1031 (ERRLLEQLEKLKLKKKQEKEARL) show a composition bias toward basic and acidic residues. Polar residues-rich tracts occupy residues 1061–1074 (NPTG…SHHQ) and 1082–1103 (EATQ…TPTG). The span at 1122-1135 (KAAEQQRRVQRGLD) shows a compositional bias: basic and acidic residues. Positions 1136–1146 (DSDGWSDDDET) are enriched in acidic residues. Low complexity predominate over residues 1156 to 1175 (AVDVSSTAVPATSTASVPVA). Composition is skewed to pro residues over residues 1226-1235 (PPVPIAPPLP) and 1304-1324 (AIPP…PPMP).

This sequence belongs to the PAN1 family. As to quaternary structure, component of the PAN1 actin cytoskeleton-regulatory complex.

It localises to the cell membrane. The protein resides in the endosome membrane. Its subcellular location is the cytoplasm. It is found in the cytoskeleton. The protein localises to the actin patch. Its function is as follows. Component of the PAN1 actin cytoskeleton-regulatory complex required for the internalization of endosomes during actin-coupled endocytosis. The complex links the site of endocytosis to the cell membrane-associated actin cytoskeleton. Mediates uptake of external molecules and vacuolar degradation of plasma membrane proteins. Plays a role in the proper organization of the cell membrane-associated actin cytoskeleton and promotes its destabilization. The sequence is that of Actin cytoskeleton-regulatory complex protein PAN1 (PAN1) from Kluyveromyces lactis (strain ATCC 8585 / CBS 2359 / DSM 70799 / NBRC 1267 / NRRL Y-1140 / WM37) (Yeast).